Consider the following 463-residue polypeptide: Quinolone resistance protein NorB (463 aa).

A run of 14 helical transmembrane segments spans residues 19–39, 53–73, 86–106, 107–127, 142–162, 165–185, 201–221, 230–250, 273–293, 299–319, 334–354, 357–377, 403–423, and 435–455; these read IVLS…VVLI, IAVS…GGLA, IILN…LLLI, IGRL…LSII, YWSI…GAVA, LGWR…LFLI, FDIK…ILIT, SLLF…FIVL, TASN…NTFV, YSLL…LIMI, PMLI…LTFL, ILYV…LGIY, MASA…YAIV, and IALW…LLLV.

Belongs to the major facilitator superfamily. TCR/Tet family.

It is found in the cell membrane. In terms of biological role, multidrug efflux pump that acts independently of NorA and is one of the factors that confers resistance against diverse quinolones and chemical compounds. The protein is Quinolone resistance protein NorB (norB) of Staphylococcus aureus (strain bovine RF122 / ET3-1).